The primary structure comprises 473 residues: tRNA-2-methylthio-N(6)-dimethylallyladenosine synthase (473 aa).

The disordered stretch occupies residues 1–21 (MTQDSALLQAPEAIPSESLRD). The MTTase N-terminal domain occupies 26–146 (RKVFIKTYGC…LPEALRRAKQ (121 aa)). Positions 35, 71, 109, 187, 191, and 194 each coordinate [4Fe-4S] cluster. The Radical SAM core domain occupies 173-405 (RARGVTAFLT…QMLLLKQQQE (233 aa)). One can recognise a TRAM domain in the interval 408 to 470 (ESCVGKEIDL…TNSLFAEHAE (63 aa)).

The protein belongs to the methylthiotransferase family. MiaB subfamily. As to quaternary structure, monomer. It depends on [4Fe-4S] cluster as a cofactor.

It localises to the cytoplasm. The enzyme catalyses N(6)-dimethylallyladenosine(37) in tRNA + (sulfur carrier)-SH + AH2 + 2 S-adenosyl-L-methionine = 2-methylsulfanyl-N(6)-dimethylallyladenosine(37) in tRNA + (sulfur carrier)-H + 5'-deoxyadenosine + L-methionine + A + S-adenosyl-L-homocysteine + 2 H(+). In terms of biological role, catalyzes the methylthiolation of N6-(dimethylallyl)adenosine (i(6)A), leading to the formation of 2-methylthio-N6-(dimethylallyl)adenosine (ms(2)i(6)A) at position 37 in tRNAs that read codons beginning with uridine. This chain is tRNA-2-methylthio-N(6)-dimethylallyladenosine synthase, found in Rhizobium johnstonii (strain DSM 114642 / LMG 32736 / 3841) (Rhizobium leguminosarum bv. viciae).